Here is an 83-residue protein sequence, read N- to C-terminus: Gas vesicle protein G2 (83 aa).

This sequence belongs to the gas vesicle GvpG family. In terms of assembly, gvpF to GvpM interact with each other in vitro, and may form multi-subunit complex(es).

It is found in the gas vesicle. Functionally, proteins GvpF to GvpM might be involved in nucleating gas vesicle formation. A minor component of the gas vesicle. Gas vesicles are hollow, gas filled proteinaceous nanostructures found in several microbial planktonic microorganisms. They allow positioning of halobacteria at the optimal depth for growth in the poorly aerated, shallow brine pools of their habitat. Expression of 2 c-vac DNA fragments containing 2 divergently transcribed regions (gvpE-gvpF-gvpG-gvpH-gvpI-gvpJ-gvpK-gvpL-gvpM and gvpA-gvpC-gvpN-gvpO) allows H.volcanii to produce gas vesicles. This chain is Gas vesicle protein G2, found in Halobacterium salinarum (strain ATCC 700922 / JCM 11081 / NRC-1) (Halobacterium halobium).